The chain runs to 124 residues: Small ribosomal subunit protein bS6 (124 aa).

The segment at 96–124 (ETGPSPMMKEVQREEAKKAAAAQPTEAQA) is disordered. The segment covering 114–124 (AAAAQPTEAQA) has biased composition (low complexity).

It belongs to the bacterial ribosomal protein bS6 family.

Binds together with bS18 to 16S ribosomal RNA. The polypeptide is Small ribosomal subunit protein bS6 (Burkholderia vietnamiensis (strain G4 / LMG 22486) (Burkholderia cepacia (strain R1808))).